Here is a 170-residue protein sequence, read N- to C-terminus: Methanogen homoaconitase small subunit (170 aa).

The short motif at 24-27 (YLRT) is the YLRT element.

It belongs to the LeuD family. LeuD type 2 subfamily. As to quaternary structure, heterotetramer of 2 HacA and 2 HacB proteins. Cannot form a complex with LeuC.

It catalyses the reaction (2R)-homocitrate = (2R,3S)-homoisocitrate. The catalysed reaction is (2R)-homocitrate = cis-homoaconitate + H2O. It carries out the reaction (2R,3S)-homoisocitrate = cis-homoaconitate + H2O. The enzyme catalyses cis-(homo)2aconitate + H2O = (2R,3S)-iso(homo)2citrate. It catalyses the reaction cis-(homo)3aconitate + H2O = (2R,3S)-iso(homo)3citrate. The catalysed reaction is (R)-malate = maleate + H2O. It carries out the reaction cis-aconitate + H2O = D-threo-isocitrate. Its pathway is organic acid metabolism; 2-oxosuberate biosynthesis. In terms of biological role, component of a hydro-lyase with broad substrate specificity for cis-unsaturated tricarboxylic acids. Catalyzes both the reversible dehydration of (R)-homocitrate ((R)-2-hydroxybutane-1,2,4-tricarboxylate) to produce cis-homoaconitate ((Z)-but-1-ene-1,2,4-tricarboxylate), and its hydration to homoisocitrate ((1R,2S)-1-hydroxybutane-1,2,4-tricarboxylate). Is also able to hydrate the analogous longer chain substrates cis-homo(2)-aconitate, cis-homo(3)-aconitate, and even the non-physiological cis-homo(4)-aconitate with similar efficiency. These reactions are part of the biosynthesis pathway of coenzyme B. Can also catalyze the hydration of maleate to (R)-malate, and that of cis-aconitate. Cannot catalyze the hydration of citraconate and the dehydration of (S)-homocitrate, citramalate, 2-isopropylmalate, 3-isopropylmalate, citrate or threo-DL-isocitrate. The protein is Methanogen homoaconitase small subunit (hacB) of Methanocaldococcus jannaschii (strain ATCC 43067 / DSM 2661 / JAL-1 / JCM 10045 / NBRC 100440) (Methanococcus jannaschii).